Consider the following 98-residue polypeptide: Venom toxin OcyC11 (98 aa).

A signal peptide spans 1 to 20 (MKIACTLVLFVMLRCYVNAR).

In terms of processing, contains 4 disulfide bonds. As to expression, expressed by the venom gland.

The protein localises to the secreted. The polypeptide is Venom toxin OcyC11 (Opisthacanthus cayaporum (South American scorpion)).